A 420-amino-acid chain; its full sequence is Phosphoglycerate kinase, cytosolic (420 aa).

(2R)-3-phosphoglycerate contacts are provided by valine 23, aspartate 24, phenylalanine 25, asparagine 26, arginine 39, serine 61, histidine 62, glycine 64, arginine 65, arginine 135, histidine 171, and arginine 172. Positions 217 and 218 each coordinate ADP. Residue glycine 217 participates in CDP binding. The AMP site is built by alanine 218 and lysine 219. Alanine 218 is an ATP binding site. Alanine 218 is a Mg(2+) binding site. Lysine 219 is a binding site for (2R)-3-phosphoglycerate. Aspartate 222 serves as a coordination point for CDP. Residue aspartate 222 coordinates Mg(2+). ADP-binding residues include lysine 223 and glycine 241. Lysine 223 contacts AMP. Lysine 223 provides a ligand contact to ATP. Glycine 241 provides a ligand contact to CDP. 2 residues coordinate AMP: alanine 242 and alanine 314. Residues alanine 242 and alanine 314 each coordinate ATP. Residues alanine 314 and asparagine 338 each coordinate ADP. Glycine 339 and phenylalanine 344 together coordinate CDP. Residues phenylalanine 344, glutamate 345, glutamate 377, and serine 378 each contribute to the ADP site. Glutamate 345 is an AMP binding site. Residues glutamate 345, glutamate 377, and serine 378 each coordinate ATP. Mg(2+) is bound at residue glutamate 377.

Belongs to the phosphoglycerate kinase family. In terms of assembly, monomer. Mg(2+) is required as a cofactor.

The protein localises to the cytoplasm. It catalyses the reaction (2R)-3-phosphoglycerate + ATP = (2R)-3-phospho-glyceroyl phosphate + ADP. Its pathway is carbohydrate degradation; glycolysis; pyruvate from D-glyceraldehyde 3-phosphate: step 2/5. The sequence is that of Phosphoglycerate kinase, cytosolic from Trypanosoma brucei brucei.